A 1775-amino-acid polypeptide reads, in one-letter code: MDTPSSSADVVNDHHYRLVYFSNELPSDEQIGAHLRRLQALSKDRRHPILKVFLDDATEVLREELRKLPSHLLSLIAPFESIIDFAYQFGLRTGPFGGSTEGVSTCLIQLGTYISYHECPTNEPLTSPHGTLVALGSGLLAAAAVSFASRLPDLVKLGSEAIRIAFRMGLRVDQASQRLETRRAEGPAESWAYVFSELSEDEVQKELATMNASLNFPAPSQIFVSAVSPGSVTISGPPSRLKTLVRSSELLRYAKWASLPIFNGLCHTSHAYTHADAEDIVSAMDLPTNSSYIPHAPLLSTRNGQPFAAHTPAQLFEDVIFELLTGTIRWDTVTATLHDRVALHFVPEVVVKALGAPNALKGFNEAVQAHADPVRVITEDVLAQSLATPLPVRAPRDPKDSKIAIVGMSCRLPGGAVSNQSFWDLLEKGLDVHRRIPADRFDVDTHWDPTGQNPNASKTPFGCFIDDPALFDAGFFNMSPREAEQTDPMHRLALVTAHEALEQAGFVPNRTPSTNIERVGVFYGQASDDYREVNAGQEIGTYYIPGGNRAFAPGRINYFYKFGGPSFSCDTACSSSLATVQIACTTLWSGDADMVIAGGVNVLTNSDGFAGLCNGHFLTQTGNCKTWDAGADGYCRADGIGSVVMKRLEDAIADNDNILATVLSAATNQSAKAVSITHPHAGAQASLYKRVMDRAGVDPLDVSYVELHGTGTQAGDATEMESVTQVFAPMGPRRRTEPLHIGAVKSNIGHGEAAAGIAALIKVLLMYKKRSIPPHTGIKTELSPVLKKFLDKKRNIHIAFEQTPWKPVYNDTRYAVVNNFSAAGGNTTMLLEEAPVKEIQDDGDDREKHVVAVSAKSKVSLKGNLEALLAYLEENPETSLSDLAYTTLARRMHYNHRIAFSASSIDHVKKQLRYHIDSEEQVRPVPSNPPAVAFAFTGQGAFYPGMGAQLYNSVPSFRDHITHLDSLCQQHGFPSILPVIENIGAETQEEPAPIVTQLTITCLEIALTKYWASLGITPSVVVGASLGEYPALHAAGVLSASDTIFLVGQRAQQLEKHCQLRSHGMMAVRASVEQITECLGDQPYEVACINAPQDTVIDGLQADIASAREKLQAQGYKCHQLDVPYAFHSSQMDPALDSYEQIASSVTFHAPQVPVISPLLSDVVFDAKSIHAQYMRRATREPVNFVGALQAAQEIGIIDHNTVWVEAGPHPVLVSFIRNCLPEVKRLVPTLRRNENNWNTLADSLAGLHSDGLTLQWNEVHRPFEASLRLLDLPSYSWNEKRYWIQYRGTWTLTKGKEVSQPVPSSAVSTLTTSSIHQVLQEDVTGSTATFVARSNLMHPDLFEAANGHRMNDCGVATSSIHGDIAFTIADHLYKKITNTSAPGINITNLIVLQGLVAQKFSKADQLFELRATADLTTSPATTTIHWYNVTDGITSPEHFASAVVEYGDANVWLSQWRRLSHLVNSRIASLERMATEGKAAVLPRNMAYRLFNNLVDYADKYRGIQSAIMHEYEAMANVTLTTQGSGTWTVPPYFTDPVAHLAGLVMNGSDASNTIDYFYVTPGWAGLRFAKPLVKGGKYQSYVQMTPIEGQAGFWNGDVYVLQDGEIIGLVEKITFRRFPRSLLPTFFSPPDVAKPLHAAAPAVPVKPAAPAPVPVSAPAEAFKSAAPKTAAPVPAPAPVPAKRAEPAPAAAQAAATQNPTITGALDLIAKESALELSQLTDDAAFATLGVDSLMSLVLAEKFTSQLGIEVKSSIFMECETVGELKTYIEETFC.

The Starter acyltransferase (SAT) domain occupies 35–262 (LRRLQALSKD…YAKWASLPIF (228 aa)). The region spanning 400–833 (DSKIAIVGMS…GGNTTMLLEE (434 aa)) is the Ketosynthase family 3 (KS3) domain. Residues cysteine 573, histidine 708, and histidine 750 each act as for beta-ketoacyl synthase activity in the active site. Residues 934 to 1244 (FAFTGQGAFY…ENNWNTLADS (311 aa)) enclose the Malonyl-CoA:ACP transacylase (MAT) domain. Residues 1313-1631 (TSSIHQVLQE…RSLLPTFFSP (319 aa)) are product template (PT) domain. Residues 1317 to 1451 (HQVLQEDVTG…SAVVEYGDAN (135 aa)) form an N-terminal hotdog fold region. In terms of domain architecture, PKS/mFAS DH spans 1317–1626 (HQVLQEDVTG…FRRFPRSLLP (310 aa)). The active-site Proton acceptor; for dehydratase activity is histidine 1349. The C-terminal hotdog fold stretch occupies residues 1480 to 1626 (AAVLPRNMAY…FRRFPRSLLP (147 aa)). Catalysis depends on aspartate 1537, which acts as the Proton donor; for dehydratase activity. A disordered region spans residues 1671–1697 (TAAPVPAPAPVPAKRAEPAPAAAQAAA). Residues 1688–1697 (PAPAAAQAAA) are compositionally biased toward low complexity. In terms of domain architecture, Carrier spans 1697-1774 (ATQNPTITGA…ELKTYIEETF (78 aa)). The residue at position 1734 (serine 1734) is an O-(pantetheine 4'-phosphoryl)serine.

The enzyme catalyses holo-[ACP] + 8 malonyl-CoA + 8 H(+) = atrochrysone carboxyl-[ACP] + 8 CO2 + 8 CoA + 2 H2O. The protein operates within secondary metabolite biosynthesis. Functionally, non-reducing polyketide synthase; part of the gene cluster that mediates the biosynthesis of physcion, a natural anthraquinone fungicide that can prevent plant fungal infections. The pathway begins with the polyketide synthase AcPKS that condenses 8 malonyl-CoA units to synthesize atrochrysone thioester which is released from the synthase by the atrochrysone carboxyl ACP thioesterase AcTE that breaks the thioester bond and leads to free atrochrysone carboxylic acid. Spontaneous decarboxylation of atrochrysone carboxylic acid leads to the formation of atrochrysone. Then, atrochrysone undergoes spontaneous dehydration and oxidation, giving the products emodin anthrone and emodin. The O-methyltransferase AcOMT then methylates the C-6 hydroxyl of emodin to form physcion. The protein is Atrochrysone carboxylic acid synthase of Aspergillus chevalieri (Eurotium chevalieri).